A 424-amino-acid chain; its full sequence is Tyrosine--tRNA ligase (424 aa).

Tyr-37 contributes to the L-tyrosine binding site. The 'HIGH' region signature appears at Pro-42–His-51. N6-acetyllysine is present on Lys-144. Residues Tyr-175 and Gln-179 each coordinate L-tyrosine. The 'KMSKS' region signature appears at Lys-235–Thr-239. Lys-238 is an ATP binding site. Positions Ala-357–Gly-414 constitute an S4 RNA-binding domain.

The protein belongs to the class-I aminoacyl-tRNA synthetase family. TyrS type 1 subfamily. In terms of assembly, homodimer.

It localises to the cytoplasm. The catalysed reaction is tRNA(Tyr) + L-tyrosine + ATP = L-tyrosyl-tRNA(Tyr) + AMP + diphosphate + H(+). Catalyzes the attachment of tyrosine to tRNA(Tyr) in a two-step reaction: tyrosine is first activated by ATP to form Tyr-AMP and then transferred to the acceptor end of tRNA(Tyr). The sequence is that of Tyrosine--tRNA ligase from Escherichia fergusonii (strain ATCC 35469 / DSM 13698 / CCUG 18766 / IAM 14443 / JCM 21226 / LMG 7866 / NBRC 102419 / NCTC 12128 / CDC 0568-73).